The sequence spans 394 residues: MKWMVVVLLCLPLLEATQIKVPLKKIKSIREVLREKGLLGDFLKNHKPQHARKFFRNRLAKTGDFSVLYEPMSYMDAAYFGQISLGTPPQSFQVLFDTGSSNLWVPSVYCSSLACTTHTRFNPRDSSTYVATDQSFSLEYGTGSLTGVFGYDTMTIQDIQVPKQEFGLSETEPGSDFVYAEFDGILGLGYPGLSEGGATTAMQGLLREGALSQSLFSVYLGSQQGSDEGQLILGGVDESLYTGDIYWTPVTQELYWQIGIEGFLIDGSASGWCSRGCQGIVDTGTSLLTVPSDYLSTLVQAIGAEENEYGEYFVSCSSIQDLPTLTFVISGVEFPLSPSAYILSGENYCMVGLESTYVSPGGGEPVWILGDVFLRSYYSVYDLANNRVGFATAA.

The first 16 residues, 1 to 16 (MKWMVVVLLCLPLLEA), serve as a signal peptide directing secretion. The propeptide at 17–65 (TQIKVPLKKIKSIREVLREKGLLGDFLKNHKPQHARKFFRNRLAKTGDF) is activation peptide. One can recognise a Peptidase A1 domain in the interval 79 to 391 (YFGQISLGTP…DLANNRVGFA (313 aa)). The active site involves Asp-97. 2 disulfides stabilise this stretch: Cys-110–Cys-115 and Cys-273–Cys-277. Thr-283 is a catalytic residue. Cys-316 and Cys-349 form a disulfide bridge.

Belongs to the peptidase A1 family.

The protein resides in the secreted. It catalyses the reaction More restricted specificity than pepsin A, but shows preferential cleavage at Tyr-|-Xaa bonds. High activity on hemoglobin.. Functionally, hydrolyzes a variety of proteins. In Cavia porcellus (Guinea pig), this protein is Gastricsin (PGC).